The chain runs to 260 residues: Phosphate import ATP-binding protein PstB (260 aa).

The 242-residue stretch at 14–255 (VQVKNLAFYY…PRNKQTEDYI (242 aa)) folds into the ABC transporter domain. Residue 46–53 (GPSGCGKS) participates in ATP binding.

This sequence belongs to the ABC transporter superfamily. Phosphate importer (TC 3.A.1.7) family. As to quaternary structure, the complex is composed of two ATP-binding proteins (PstB), two transmembrane proteins (PstC and PstA) and a solute-binding protein (PstS).

It localises to the cell inner membrane. It carries out the reaction phosphate(out) + ATP + H2O = ADP + 2 phosphate(in) + H(+). In terms of biological role, part of the ABC transporter complex PstSACB involved in phosphate import. Responsible for energy coupling to the transport system. The sequence is that of Phosphate import ATP-binding protein PstB from Syntrophotalea carbinolica (strain DSM 2380 / NBRC 103641 / GraBd1) (Pelobacter carbinolicus).